The chain runs to 96 residues: Aspartyl/glutamyl-tRNA(Asn/Gln) amidotransferase subunit C (96 aa).

The protein belongs to the GatC family. As to quaternary structure, heterotrimer of A, B and C subunits.

It catalyses the reaction L-glutamyl-tRNA(Gln) + L-glutamine + ATP + H2O = L-glutaminyl-tRNA(Gln) + L-glutamate + ADP + phosphate + H(+). It carries out the reaction L-aspartyl-tRNA(Asn) + L-glutamine + ATP + H2O = L-asparaginyl-tRNA(Asn) + L-glutamate + ADP + phosphate + 2 H(+). Allows the formation of correctly charged Asn-tRNA(Asn) or Gln-tRNA(Gln) through the transamidation of misacylated Asp-tRNA(Asn) or Glu-tRNA(Gln) in organisms which lack either or both of asparaginyl-tRNA or glutaminyl-tRNA synthetases. The reaction takes place in the presence of glutamine and ATP through an activated phospho-Asp-tRNA(Asn) or phospho-Glu-tRNA(Gln). This is Aspartyl/glutamyl-tRNA(Asn/Gln) amidotransferase subunit C from Herpetosiphon aurantiacus (strain ATCC 23779 / DSM 785 / 114-95).